The sequence spans 1358 residues: MSEFHRLYFDELLFDFPDLVKVQKDSYASFVGGGDTVFSISDIFASVFPVNDGYGRASLEFVSCRMGEPKHDEYGCVERGITYSAPLRAILRLVVFGDETSGEGSEGVSTEPAVKDVREQEIYMGDIPIMSKNGTFIINGVERVVVSQMHRAPGVFFDNDKARSISGKLNYIARIIPYRGSWLDFEFDAKDVLYFRIDKKRKLPVTFLLRALGLSNKDIFAQFCEVSECRLTKDGKWTVCFVPEKFKGVRLQYDLINAETGELVLAKGNRISIVLARNLYAKGLRYCYMDLEVMKDMYLADDLVSTKGEVLLPHGTKLTKEHVAKLEFLDVDSIKLVELKGNYVFSTVLQYDCSYEEAMLSIYRVVRPGEIPSVESAEKLFESLFFSPERYDLLNVGRIRLNAKFNLSHDESLTVLTKEDIFCTVKELALLQREVGDVDDIDHLGNRRVRSVGEFMDNQFRIGLVRMAKVIVENMATADFDTVMPCEMINSKILGAVIREFFMSSALSQFMDQTNPLSEITHKRRISALGPGGLNRGRAGFEVRDVHTTHYGRICATETPEGATIGLINSLAIYAKINKYGFIETPYRYVRDGRVTDEVTYLSAIDEIKANICQASVRVDEEGYIVDDLVYCRRNYENVFIPRSEVQFADVSAKQIVSVAASLIPFLENDDANRALMGSNMQRQAVPLIMPEAPLVGTGMEGYVARGSGAVIVAKRAGVVQYIDARNIVVASESKDDFWIDSYTLCKFRKSNHNTCIHQRCVVHQGQRVKKGDILADGPAIQKGELALGRNLVVAFLSWRGYNFEDSVVISSNVVRDDLFTSVHLEGFECVVRDTRLGPEEITRDVSGVAEEFLHCLDEFGIACVGANVEAGDVLVGKVTPKSSSPVTPEEKLLRAIFGEKAIDVKDSSLYLPPGVSGCVVDVKVLQRRGIEKVGRALLIEKQAIDAEKTRRDHELAVLTNYIYSLLKEMLVGKVALSTLAPISKGDLITEEALEKIDRENWWKISVDGISSIKLLRQRFVDRFDEINKTYEENFEKIRGDDDLAQGVLMVVKVFVAVKHTLQPGDKMSGRHGNKGVISRIVPAEDMPYLADGTPVDIILNPLGVPSRMNVGQILETHLGWAAYNLGKKISKLLDEGNYSEVKSLVLEIYKNDRKMMARLNEMTDAEIVEYSRSLRGGVPVAASVFEGPKTDEIERLLVLAGKDPSGQEVLYDGVTGEKFDRKVTVGCKYMLKLHHLVNDKIHARSIGSYSLITQQPLGGKSHFGGQRFGEMECWALQAYGATFALQEMLTIKSDDVVGRVNVYDSIVRGDNDFYYGVPESFNVMMNELRALCLNVEFCSDLEKKKDFGDLALAASGQ.

It belongs to the RNA polymerase beta chain family. The RNAP catalytic core consists of 2 alpha, 1 beta, 1 beta' and 1 omega subunit. When a sigma factor is associated with the core the holoenzyme is formed, which can initiate transcription.

The enzyme catalyses RNA(n) + a ribonucleoside 5'-triphosphate = RNA(n+1) + diphosphate. DNA-dependent RNA polymerase catalyzes the transcription of DNA into RNA using the four ribonucleoside triphosphates as substrates. The chain is DNA-directed RNA polymerase subunit beta from Neorickettsia sennetsu (strain ATCC VR-367 / Miyayama) (Ehrlichia sennetsu).